The chain runs to 412 residues: Peptidase T (412 aa).

Histidine 78 is a binding site for Zn(2+). Residue aspartate 80 is part of the active site. Aspartate 140 is a binding site for Zn(2+). Glutamate 174 serves as the catalytic Proton acceptor. Zn(2+) contacts are provided by glutamate 175, aspartate 197, and histidine 379.

This sequence belongs to the peptidase M20B family. Zn(2+) is required as a cofactor.

Its subcellular location is the cytoplasm. The enzyme catalyses Release of the N-terminal residue from a tripeptide.. Its function is as follows. Cleaves the N-terminal amino acid of tripeptides. This is Peptidase T from Staphylococcus epidermidis (strain ATCC 12228 / FDA PCI 1200).